We begin with the raw amino-acid sequence, 113 residues long: uncharacterized protein (113 aa).

The disordered stretch occupies residues 28 to 55 (CDGGPRRPLSRRGEEARRARAPSYEEQE).

This is an uncharacterized protein from Human cytomegalovirus (strain AD169) (HHV-5).